The following is a 367-amino-acid chain: Undecaprenyl-phosphate alpha-N-acetylglucosaminyl 1-phosphate transferase (367 aa).

9 consecutive transmembrane segments (helical) span residues Leu3–Leu23, Gly45–Leu65, Tyr69–Met89, Trp129–Ile149, Ile158–Trp178, Met187–Leu207, Val213–Glu233, Ile242–Met262, and Val318–Ile338.

The protein belongs to the glycosyltransferase 4 family. WecA subfamily. It depends on Mg(2+) as a cofactor. The cofactor is Mn(2+).

The protein localises to the cell inner membrane. It carries out the reaction di-trans,octa-cis-undecaprenyl phosphate + UDP-N-acetyl-alpha-D-glucosamine = N-acetyl-alpha-D-glucosaminyl-di-trans,octa-cis-undecaprenyl diphosphate + UMP. Its pathway is bacterial outer membrane biogenesis; LPS O-antigen biosynthesis. It participates in bacterial outer membrane biogenesis; enterobacterial common antigen biosynthesis. With respect to regulation, inhibited by tunicamycin. Catalyzes the transfer of the GlcNAc-1-phosphate moiety from UDP-GlcNAc onto the carrier lipid undecaprenyl phosphate (C55-P), yielding GlcNAc-pyrophosphoryl-undecaprenyl (GlcNAc-PP-C55). The polypeptide is Undecaprenyl-phosphate alpha-N-acetylglucosaminyl 1-phosphate transferase (Salmonella typhimurium (strain LT2 / SGSC1412 / ATCC 700720)).